A 569-amino-acid chain; its full sequence is Potassium-transporting ATPase potassium-binding subunit (569 aa).

Transmembrane regions (helical) follow at residues 3 to 23, 68 to 88, 136 to 156, 179 to 199, 259 to 279, 284 to 304, 384 to 404, 422 to 442, 490 to 510, and 534 to 554; these read LMEY…SPVL, AASL…VLML, VGLA…AVAV, VLYV…GQGV, LQML…GGAV, HAWT…CSLY, GLYG…LMVG, AMLA…VAAV, IALA…GVAG, and LLLT…ALAL.

The protein belongs to the KdpA family. In terms of assembly, the system is composed of three essential subunits: KdpA, KdpB and KdpC.

It is found in the cell inner membrane. Part of the high-affinity ATP-driven potassium transport (or Kdp) system, which catalyzes the hydrolysis of ATP coupled with the electrogenic transport of potassium into the cytoplasm. This subunit binds the periplasmic potassium ions and delivers the ions to the membrane domain of KdpB through an intramembrane tunnel. This is Potassium-transporting ATPase potassium-binding subunit from Nitratidesulfovibrio vulgaris (strain ATCC 29579 / DSM 644 / CCUG 34227 / NCIMB 8303 / VKM B-1760 / Hildenborough) (Desulfovibrio vulgaris).